A 201-amino-acid polypeptide reads, in one-letter code: dITP/XTP pyrophosphatase (201 aa).

Position 7-12 (7-12 (TNNKGK)) interacts with substrate. Glu40 and Asp69 together coordinate Mg(2+). Asp69 functions as the Proton acceptor in the catalytic mechanism. Substrate contacts are provided by residues Ser70, 152 to 155 (FGYD), Lys175, and 180 to 181 (HR).

The protein belongs to the HAM1 NTPase family. In terms of assembly, homodimer. Requires Mg(2+) as cofactor.

The catalysed reaction is XTP + H2O = XMP + diphosphate + H(+). It catalyses the reaction dITP + H2O = dIMP + diphosphate + H(+). It carries out the reaction ITP + H2O = IMP + diphosphate + H(+). Functionally, pyrophosphatase that catalyzes the hydrolysis of nucleoside triphosphates to their monophosphate derivatives, with a high preference for the non-canonical purine nucleotides XTP (xanthosine triphosphate), dITP (deoxyinosine triphosphate) and ITP. Seems to function as a house-cleaning enzyme that removes non-canonical purine nucleotides from the nucleotide pool, thus preventing their incorporation into DNA/RNA and avoiding chromosomal lesions. This is dITP/XTP pyrophosphatase from Desulforamulus reducens (strain ATCC BAA-1160 / DSM 100696 / MI-1) (Desulfotomaculum reducens).